We begin with the raw amino-acid sequence, 1230 residues long: Cullin-associated NEDD8-dissociated protein 1 (1230 aa).

At Ala-2 the chain carries N-acetylalanine. HEAT repeat units follow at residues 2 to 39, 44 to 81, 83 to 119, 131 to 165, 171 to 208, 210 to 247, 248 to 282, 289 to 366, 370 to 407, 424 to 467, 471 to 510, and 515 to 552; these read ASASYHISNLLEKMTSSGKDFRFMATNDLMTELQKDSI, DSERKVVKMILKLQEDKNGEVQNLAVKCLGPLVSKVKE, QVETIVDTLCTNMLSDKEQLRDISSIGLKTVIGELPP, CKKITGRLTSAIAKQEDVSVQLEALDIMADMLSRQ, NFHPSILTCLLPQLTSPRLAVRKRTIIALGHLVMSCGN, VFVGLIEHLLSELSKNDSMSTTRTYIQCIAAISRQAGH, RIGEYLEKIIPLVVKFCNVDDDELREYCIQAFESF, EVYP…TRHE, EFYKTVSPALISRFKEREENVKADVFHAYLSLLKQTRP, PLTM…VLPG, QHIPVLVPGIIFSLNDESSSSNLKIDALSCLYVILCNHSP, and PHVQALVPPVVACVGDPFYKITSEALLVTQQLVKVIRP. Lys-55 bears the N6-acetyllysine mark. The disordered stretch occupies residues 315–343; it reads DEDEDENAMDADGGDDDDQGSDDEYSDDG. Ser-335 carries the post-translational modification Phosphoserine. Phosphoserine is present on Ser-558. HEAT repeat units follow at residues 563–602, 606–643, 646–683, 688–725, 729–768, 770–808, 809–845, 852–889, 890–927, 928–960, 961–998, 1002–1039, 1043–1097, 1099–1133, and 1140–1189; these read PYIKDVFTCTIKRLKAADIDQDVKERAISCMGQIICNLGD, SDLPNTLQIFLERLKNEITRLTTVKALTLIAGSPLKID, PVLGEGVPILASFLRKNQRALKLGTLSALDILIKNYSD, AMIDAVLDELPPLISESDMHVSQMAISFLTTLAKVYPS, KISGSILNELIGLVRSPLLQGGALSAMLDFFQALVVTGTN, LGYMDLLRMLTGPVYSQSTALTHKQSYYSIAKCVAALTR, ACPKEGPAVVGQFIQDVKNSRSTDSIRLLALLSLGEV, SGQLELKSVILEAFSSPSEEVKSAASYALGSISVGNLP, EYLPFVLQEITSQPKRQYLLLHSLKEIISSASVVGLKP, YVENIWALLLKHCECAEEGTRNVVAECLGKLTL, IDPETLLPRLKGYLISGSSYARSSVVTAVKFTISDHPQ, PLLKNCIGDFLKTLEDPDLNVRRVALVTFNSAAHNKPS, DLLD…DSCL, RLDIFEFLNHVEDGLKDHYDIKMLTFLMLVRLSTL, and QRLD…IPEA. Lys-971 carries the N6-acetyllysine modification.

Belongs to the CAND family. As to quaternary structure, interacts with TBP. Part of a complex that contains CUL1 and RBX1. Interacts with unneddylated cullins: interacts with CUL1, CUL2, CUL3, CUL4A, CUL4B and CUL5. Does not bind neddylated CUL1. Interaction with cullins is abolished in presence of COMMD1, which antagonizes with CAND1 for interacting with cullins. Interacts with ERCC6. Interacts with DCUN1D1, DCUN1D2, DCUN1D3, DCUN1D4 and DCUN1D5; these interactions are bridged by cullins and strongly inhibits the neddylation of cullins.

Its subcellular location is the cytoplasm. It localises to the nucleus. Functionally, key assembly factor of SCF (SKP1-CUL1-F-box protein) E3 ubiquitin ligase complexes that promotes the exchange of the substrate-recognition F-box subunit in SCF complexes, thereby playing a key role in the cellular repertoire of SCF complexes. Acts as a F-box protein exchange factor. The exchange activity of CAND1 is coupled with cycles of neddylation conjugation: in the deneddylated state, cullin-binding CAND1 binds CUL1-RBX1, increasing dissociation of the SCF complex and promoting exchange of the F-box protein. Probably plays a similar role in other cullin-RING E3 ubiquitin ligase complexes. The chain is Cullin-associated NEDD8-dissociated protein 1 (CAND1) from Pongo abelii (Sumatran orangutan).